The primary structure comprises 285 residues: Elongation factor Ts (285 aa).

The segment at 82–85 is involved in Mg(2+) ion dislocation from EF-Tu; the sequence is TDFV.

It belongs to the EF-Ts family.

It is found in the cytoplasm. In terms of biological role, associates with the EF-Tu.GDP complex and induces the exchange of GDP to GTP. It remains bound to the aminoacyl-tRNA.EF-Tu.GTP complex up to the GTP hydrolysis stage on the ribosome. The sequence is that of Elongation factor Ts from Sodalis glossinidius (strain morsitans).